The primary structure comprises 1134 residues: Isoleucine--tRNA ligase (1134 aa).

A 'HIGH' region motif is present at residues 52–62; sequence PFANGLPHYGH. The 'KMSKS' region motif lies at 656–660; sequence KLSKR. An ATP-binding site is contributed by Lys-659.

The protein belongs to the class-I aminoacyl-tRNA synthetase family. IleS type 2 subfamily. In terms of assembly, monomer. The cofactor is Zn(2+).

The protein localises to the cytoplasm. It catalyses the reaction tRNA(Ile) + L-isoleucine + ATP = L-isoleucyl-tRNA(Ile) + AMP + diphosphate. Functionally, catalyzes the attachment of isoleucine to tRNA(Ile). As IleRS can inadvertently accommodate and process structurally similar amino acids such as valine, to avoid such errors it has two additional distinct tRNA(Ile)-dependent editing activities. One activity is designated as 'pretransfer' editing and involves the hydrolysis of activated Val-AMP. The other activity is designated 'posttransfer' editing and involves deacylation of mischarged Val-tRNA(Ile). The polypeptide is Isoleucine--tRNA ligase (Wolbachia sp. subsp. Brugia malayi (strain TRS)).